The primary structure comprises 209 residues: Large ribosomal subunit protein uL3 (209 aa).

The interval 127–152 (SGGPSSHGSKFHRHLGSTGQAATPSR) is disordered. A compositionally biased stretch (polar residues) spans 143-152 (STGQAATPSR).

It belongs to the universal ribosomal protein uL3 family. Part of the 50S ribosomal subunit. Forms a cluster with proteins L14 and L19.

Functionally, one of the primary rRNA binding proteins, it binds directly near the 3'-end of the 23S rRNA, where it nucleates assembly of the 50S subunit. This Borrelia hermsii (strain HS1 / DAH) protein is Large ribosomal subunit protein uL3.